Here is a 99-residue protein sequence, read N- to C-terminus: uncharacterized protein (99 aa).

The first 19 residues, 1–19, serve as a signal peptide directing secretion; the sequence is MLGMIRWVVEGTLVAMLLS. The interval 71-99 is disordered; that stretch reads DGFGRINDSGPKRRGRDQSQYSSRFVELD.

It is found in the cytoplasm. This is an uncharacterized protein from Saccharomyces cerevisiae (strain ATCC 204508 / S288c) (Baker's yeast).